A 512-amino-acid chain; its full sequence is Serine/threonine-protein kinase SSN3 (512 aa).

2 disordered regions span residues 1 to 22 (MNNH…DRPW) and 75 to 94 (AEVS…TGSM). Residues 106–455 (YKVVGFISSG…AAAALQHPFF (350 aa)) form the Protein kinase domain. Residues 112-120 (ISSGTYGRV) and lysine 136 contribute to the ATP site. Aspartate 238 (proton acceptor) is an active-site residue. Disordered regions lie at residues 368-388 (QPPI…RQAA) and 476-512 (RRVS…VKEG). Basic residues predominate over residues 373-382 (HGGHHGHHYQ). Basic and acidic residues-rich tracts occupy residues 476–485 (RRVSQDDNDI) and 497–512 (GLPD…VKEG).

This sequence belongs to the protein kinase superfamily. CMGC Ser/Thr protein kinase family. CDC2/CDKX subfamily. Component of the SRB8-11 complex, a regulatory module of the Mediator complex. It depends on Mg(2+) as a cofactor.

The protein localises to the nucleus. It catalyses the reaction L-seryl-[protein] + ATP = O-phospho-L-seryl-[protein] + ADP + H(+). It carries out the reaction L-threonyl-[protein] + ATP = O-phospho-L-threonyl-[protein] + ADP + H(+). The catalysed reaction is [DNA-directed RNA polymerase] + ATP = phospho-[DNA-directed RNA polymerase] + ADP + H(+). Its function is as follows. Component of the SRB8-11 complex. The SRB8-11 complex is a regulatory module of the Mediator complex which is itself involved in regulation of basal and activated RNA polymerase II-dependent transcription. The SRB8-11 complex may be involved in the transcriptional repression of a subset of genes regulated by Mediator. It may inhibit the association of the Mediator complex with RNA polymerase II to form the holoenzyme complex. The SRB8-11 complex phosphorylates the C-terminal domain (CTD) of the largest subunit of RNA polymerase II. This is Serine/threonine-protein kinase SSN3 (SSN3) from Chaetomium globosum (strain ATCC 6205 / CBS 148.51 / DSM 1962 / NBRC 6347 / NRRL 1970) (Soil fungus).